The primary structure comprises 735 residues: Photosystem I P700 chlorophyll a apoprotein A2 (735 aa).

8 helical membrane passes run 46–69 (IFAS…FYVS), 135–158 (LSTA…IHGY), 176–200 (LNHH…HVAI), 274–292 (IAHH…GHMY), 329–352 (LNLQ…QHMY), 368–394 (AALY…IFLV), 416–438 (VIIS…LYVH), and 521–539 (FLVH…LILV). [4Fe-4S] cluster is bound by residues cysteine 563 and cysteine 572. The next 2 helical transmembrane spans lie at 579 to 600 (AFYL…YWHW) and 647 to 669 (LSVW…MFLI). Positions 658, 666, and 674 each coordinate chlorophyll a. Phylloquinone is bound at residue tryptophan 675. Residues 708 to 728 (FVGLIHFTVGYILTYAAFLIA) form a helical membrane-spanning segment.

Belongs to the PsaA/PsaB family. As to quaternary structure, the PsaA/B heterodimer binds the P700 chlorophyll special pair and subsequent electron acceptors. PSI consists of a core antenna complex that captures photons, and an electron transfer chain that converts photonic excitation into a charge separation. The eukaryotic PSI reaction center is composed of at least 11 subunits. The cofactor is P700 is a chlorophyll a/chlorophyll a' dimer, A0 is one or more chlorophyll a, A1 is one or both phylloquinones and FX is a shared 4Fe-4S iron-sulfur center..

Its subcellular location is the plastid. The protein resides in the chloroplast thylakoid membrane. It carries out the reaction reduced [plastocyanin] + hnu + oxidized [2Fe-2S]-[ferredoxin] = oxidized [plastocyanin] + reduced [2Fe-2S]-[ferredoxin]. In terms of biological role, psaA and PsaB bind P700, the primary electron donor of photosystem I (PSI), as well as the electron acceptors A0, A1 and FX. PSI is a plastocyanin/cytochrome c6-ferredoxin oxidoreductase, converting photonic excitation into a charge separation, which transfers an electron from the donor P700 chlorophyll pair to the spectroscopically characterized acceptors A0, A1, FX, FA and FB in turn. Oxidized P700 is reduced on the lumenal side of the thylakoid membrane by plastocyanin or cytochrome c6. This is Photosystem I P700 chlorophyll a apoprotein A2 from Bigelowiella natans (Pedinomonas minutissima).